The primary structure comprises 444 residues: tRNA modification GTPase MnmE (444 aa).

Arginine 25, glutamate 83, and lysine 122 together coordinate (6S)-5-formyl-5,6,7,8-tetrahydrofolate. Residues 218–370 form the TrmE-type G domain; it reads GFKVAIVGKP…IVGRLRDYLD (153 aa). GTP-binding positions include 228-233, 247-253, and 272-275; these read NVGKSS, SDEAGTT, and DTAG. 2 residues coordinate Mg(2+): serine 232 and threonine 253. Lysine 444 provides a ligand contact to (6S)-5-formyl-5,6,7,8-tetrahydrofolate.

The protein belongs to the TRAFAC class TrmE-Era-EngA-EngB-Septin-like GTPase superfamily. TrmE GTPase family. Homodimer. Heterotetramer of two MnmE and two MnmG subunits. K(+) serves as cofactor.

It is found in the cytoplasm. Exhibits a very high intrinsic GTPase hydrolysis rate. Involved in the addition of a carboxymethylaminomethyl (cmnm) group at the wobble position (U34) of certain tRNAs, forming tRNA-cmnm(5)s(2)U34. This chain is tRNA modification GTPase MnmE, found in Campylobacter curvus (strain 525.92).